A 519-amino-acid polypeptide reads, in one-letter code: Exodeoxyribonuclease 7 large subunit (519 aa).

The segment at 493-519 (AISTGKSSNTNRKSAPAREPGKQGSLF) is disordered. Over residues 496 to 505 (TGKSSNTNRK) the composition is skewed to polar residues.

The protein belongs to the XseA family. As to quaternary structure, heterooligomer composed of large and small subunits.

It localises to the cytoplasm. It catalyses the reaction Exonucleolytic cleavage in either 5'- to 3'- or 3'- to 5'-direction to yield nucleoside 5'-phosphates.. Functionally, bidirectionally degrades single-stranded DNA into large acid-insoluble oligonucleotides, which are then degraded further into small acid-soluble oligonucleotides. The chain is Exodeoxyribonuclease 7 large subunit from Chelativorans sp. (strain BNC1).